We begin with the raw amino-acid sequence, 942 residues long: Apolipoprotein B receptor (942 aa).

Disordered stretches follow at residues 66–212 (GLRS…VTED), 240–269 (ERMV…QAML), 283–487 (DSLG…SPER), 501–607 (AGPE…VPWE), and 671–942 (EGRG…PKPQ). Basic and acidic residues-rich tracts occupy residues 106–123 (QAER…DARG), 132–143 (PEAEPGTHRDRS), 240–252 (ERMV…ERAR), 312–330 (EADK…EAEV), and 338–352 (EAER…HIAE). Residues 353–370 (EEAMGEQETEGSFEDEER) show a composition bias toward acidic residues. Position 364 is a phosphoserine (Ser364). Residues 384-397 (EEVRAEESSREKRN) show a composition bias toward basic and acidic residues. Residues 415 to 425 (PDWEDSPEVST) show a composition bias toward acidic residues. Basic and acidic residues-rich tracts occupy residues 444 to 458 (LRVK…ELVR) and 466 to 475 (QLEEGQKGQE). A phosphoserine mark is found at Ser484 and Ser520. Composition is skewed to basic and acidic residues over residues 514–531 (GVDR…EAGK) and 672–687 (GRGE…ETTE). Over residues 709–721 (QEIDGTEEGEQAE) the composition is skewed to acidic residues. Low complexity predominate over residues 837 to 853 (SRLDVSVPRSRVLLSRS). The span at 854 to 863 (SSRRRSRPSF) shows a compositional bias: basic residues.

Homodimer. There are 2 forms in macrophages, the membrane-binding proteins 200 kDa (MBP 200) and 235 kDa (MBP 235), that can be reduced into a single active ligand-binding species with intermediate mobility (MBP 200R). As to expression, highly expressed in spleen, lung and skeletal muscle, and weakly in brain, heart, kidney, and testis.

It localises to the cell membrane. Functionally, macrophage receptor that binds to the apolipoprotein B48 (APOB) of dietary triglyceride (TG)-rich lipoproteins (TRL) or to a like domain of APOB in hypertriglyceridemic very low density lipoprotein (HTG-VLDL). Binds and internalizes TRL when out of the context of the macrophage. May provide essential lipids to reticuloendothelial cells. Could also be involved in foam cell formation with elevated TRL and remnant lipoprotein (RLP). Mediates the rapid high-affinity uptake of chylomicrons (CM), HTG-VLDL, and trypsinized (tryp) VLDL devoid of APOE in vitro in macrophages. The protein is Apolipoprotein B receptor of Mus musculus (Mouse).